The chain runs to 148 residues: Protein-arginine-phosphatase (148 aa).

The active-site Nucleophile is the cysteine 9. 10-15 contacts substrate; sequence TGNTCR. Arginine 15 is an active-site residue. Residue aspartate 117 is the Proton donor of the active site.

Belongs to the low molecular weight phosphotyrosine protein phosphatase family. In terms of assembly, is present in solution as a mixture of monomers, dimers and higher order oligomers (trimers and tetramers).

The enzyme catalyses N(omega)-phospho-L-arginyl-[protein] + H2O = L-arginyl-[protein] + phosphate. Its activity is regulated as follows. Irreversibly inhibited by the synthetic inhibitor cyc-SeCN-amidine, which inactivates the enzyme by inducing disulfide bond formation between the two active site cysteine residues Cys-9 and Cys-14. Functionally, catalyzes the specific dephosphorylation of phosphoarginine residues in proteins. Probably counteracts the protein arginine kinase McsB in vivo. Exhibits almost no activity against pTyr peptides. Protein arginine phosphorylation has a physiologically important role and is involved in the regulation of many critical cellular processes, such as protein homeostasis, motility, competence, and stringent and stress responses, by regulating gene expression and protein activity. This chain is Protein-arginine-phosphatase (ywle), found in Geobacillus stearothermophilus (Bacillus stearothermophilus).